A 360-amino-acid chain; its full sequence is MYTLHYICLVLSCVIYFVWTLSCPTRNQYVSVKYVNLTNYSGPYPNGTTLHVTCREGYAKRPVQTVTCVNGNWTVPKKCQKKKCSTPQDLLNGRYTVTGNLYYGSVITYTCNSGYSLIGSTTSACLLKRGGRVDWTPRPPICDIKKCKPPPQIANGTHTNVKDFYTYLDTVTYSCNDETKLTLTGPSSKLCSETGSWVPNGETKCEFIFCKLPQVANAYVEVRKSATSMQYLHINVKCYKGFMLYGETPNTCNHGVWSPAIPECMKISSPKGDMPGINSNEDNSTPSGRICNGNCTTSMPTQTYTIITARYTSHIYFPTGKTYKLPRGVLVIILTTSFIIIGIILTGVCLHRCRVCMSGQ.

A signal peptide spans 1-20 (MYTLHYICLVLSCVIYFVWT). 4 consecutive Sushi domains span residues 21 to 81 (LSCP…KCQK), 82 to 144 (KKCS…ICDI), 145 to 207 (KKCK…KCEF), and 208 to 266 (IFCK…ECMK). 8 cysteine pairs are disulfide-bonded: Cys-23–Cys-68, Cys-54–Cys-79, Cys-84–Cys-125, Cys-111–Cys-142, Cys-147–Cys-191, Cys-175–Cys-205, Cys-210–Cys-252, and Cys-238–Cys-264. N-linked (GlcNAc...) asparagine; by host glycosylation is found at Asn-36, Asn-39, Asn-46, and Asn-72. Asn-155 carries N-linked (GlcNAc...) asparagine; by host glycosylation. Asn-294 is a glycosylation site (N-linked (GlcNAc...) asparagine; by host). The chain crosses the membrane as a helical span at residues 328-350 (GVLVIILTTSFIIIGIILTGVCL).

Belongs to the receptors of complement activation (RCA) family.

It localises to the membrane. The protein localises to the secreted. This Saimiriine herpesvirus 2 (strain 11) (SaHV-2) protein is Complement control protein homolog (4).